We begin with the raw amino-acid sequence, 401 residues long: Acetate kinase (401 aa).

Residue asparagine 7 coordinates Mg(2+). Lysine 14 contacts ATP. Arginine 90 contacts substrate. Aspartate 147 serves as the catalytic Proton donor/acceptor. ATP contacts are provided by residues 207–211 (HLGNG), 282–284 (DFR), and 330–334 (GVGEN). A Mg(2+)-binding site is contributed by glutamate 383.

The protein belongs to the acetokinase family. Homodimer. Mg(2+) is required as a cofactor. It depends on Mn(2+) as a cofactor.

It is found in the cytoplasm. The catalysed reaction is acetate + ATP = acetyl phosphate + ADP. It participates in metabolic intermediate biosynthesis; acetyl-CoA biosynthesis; acetyl-CoA from acetate: step 1/2. Catalyzes the formation of acetyl phosphate from acetate and ATP. Can also catalyze the reverse reaction. This Clostridium novyi (strain NT) protein is Acetate kinase.